A 411-amino-acid chain; its full sequence is Serine hydroxymethyltransferase (411 aa).

Residues L117 and G121–L123 contribute to the (6S)-5,6,7,8-tetrahydrofolate site. Residue K226 is modified to N6-(pyridoxal phosphate)lysine. (6S)-5,6,7,8-tetrahydrofolate-binding positions include E241 and S349–F351.

This sequence belongs to the SHMT family. Homodimer. Pyridoxal 5'-phosphate serves as cofactor.

It localises to the cytoplasm. It catalyses the reaction (6R)-5,10-methylene-5,6,7,8-tetrahydrofolate + glycine + H2O = (6S)-5,6,7,8-tetrahydrofolate + L-serine. It functions in the pathway one-carbon metabolism; tetrahydrofolate interconversion. Its pathway is amino-acid biosynthesis; glycine biosynthesis; glycine from L-serine: step 1/1. Its function is as follows. Catalyzes the reversible interconversion of serine and glycine with tetrahydrofolate (THF) serving as the one-carbon carrier. This reaction serves as the major source of one-carbon groups required for the biosynthesis of purines, thymidylate, methionine, and other important biomolecules. Also exhibits THF-independent aldolase activity toward beta-hydroxyamino acids, producing glycine and aldehydes, via a retro-aldol mechanism. The sequence is that of Serine hydroxymethyltransferase from Macrococcus caseolyticus (strain JCSC5402) (Macrococcoides caseolyticum).